The chain runs to 459 residues: Chromosomal replication initiator protein DnaA (459 aa).

Residues 1 to 74 (MQKIETFWHF…DEMAQDHFNE (74 aa)) are domain I, interacts with DnaA modulators. The segment at 74-122 (ERISFRLELREPAESEAQTVRTSAQKNREDKKPAAEKTQGVTSRKTNPS) is domain II. The interval 87 to 122 (ESEAQTVRTSAQKNREDKKPAAEKTQGVTSRKTNPS) is disordered. Residues 89–98 (EAQTVRTSAQ) are compositionally biased toward polar residues. Over residues 99 to 108 (KNREDKKPAA) the composition is skewed to basic and acidic residues. A compositionally biased stretch (polar residues) spans 112-122 (QGVTSRKTNPS). Residues 123–339 (QLNASFTFDA…GALKRVLAFS (217 aa)) are domain III, AAA+ region. ATP contacts are provided by Gly167, Gly169, Lys170, and Thr171. Residues 340 to 459 (RFTGHSISLD…FNALMHILRG (120 aa)) are domain IV, binds dsDNA.

This sequence belongs to the DnaA family. In terms of assembly, oligomerizes as a right-handed, spiral filament on DNA at oriC.

The protein resides in the cytoplasm. Plays an essential role in the initiation and regulation of chromosomal replication. ATP-DnaA binds to the origin of replication (oriC) to initiate formation of the DNA replication initiation complex once per cell cycle. Binds the DnaA box (a 9 base pair repeat at the origin) and separates the double-stranded (ds)DNA. Forms a right-handed helical filament on oriC DNA; dsDNA binds to the exterior of the filament while single-stranded (ss)DNA is stabiized in the filament's interior. The ATP-DnaA-oriC complex binds and stabilizes one strand of the AT-rich DNA unwinding element (DUE), permitting loading of DNA polymerase. After initiation quickly degrades to an ADP-DnaA complex that is not apt for DNA replication. Binds acidic phospholipids. The sequence is that of Chromosomal replication initiator protein DnaA from Nitrosomonas europaea (strain ATCC 19718 / CIP 103999 / KCTC 2705 / NBRC 14298).